Here is a 612-residue protein sequence, read N- to C-terminus: Citryl-spermidine/3,4-dihydroxybenzoyl-citryl-spermidine:spermidine ligase (612 aa).

Residues 282–284 (SMR), lysine 298, arginine 310, tyrosine 390, and glutamate 461 contribute to the ATP site.

Belongs to the IucA/IucC family. As to quaternary structure, homodimer.

It carries out the reaction N(8)-citryl-spermidine + spermidine + ATP = N(8),N'(8)-citryl-bis(spermidine) + AMP + diphosphate + H(+). The catalysed reaction is N(1)-(3,4-dihydroxybenzoyl)-N(8)-citryl-spermidine + spermidine + ATP = N(1)-(3,4-dihydroxybenzoyl)-N(8),N'(8)-citryl-bis(spermidine) + AMP + diphosphate + H(+). Its pathway is siderophore biosynthesis; petrobactin biosynthesis. In terms of biological role, involved in the biosynthesis of petrobactin, a catecholate siderophore that functions in both iron acquisition and virulence. Catalyzes the ATP-dependent condensation of spermidine with N(8)-citryl-spermidine or N(1)-(3,4-dihydroxbenzoyl)-N(8)-citryl-spermidine, two intermediates in petrobactin biosynthesis pathway. The polypeptide is Citryl-spermidine/3,4-dihydroxybenzoyl-citryl-spermidine:spermidine ligase (Bacillus anthracis).